The primary structure comprises 823 residues: Apoptosis-resistant E3 ubiquitin protein ligase 1 (823 aa).

The stretch at 64–158 (WDWKDPYEVG…VAYSPYYKIF (95 aa)) is one Filamin repeat. The disordered stretch occupies residues 315–345 (PPMHMSSSQRRPSTAIEEDDEDSPSECHTPE). The tract at residues 483 to 789 (SISDWSKNFE…THSTLPTAHT (307 aa)) is interaction with SOCS2. The HECT domain occupies 483-823 (SISDWSKNFE…SEGCEGFGML (341 aa)). Cys-790 functions as the Glycyl thioester intermediate in the catalytic mechanism.

Interacts with SOCS2. Interacts (via HECT domain) with HTRA2, DIABLO/SMAC and SEPTIN4; in the cytoplasm following induction of apoptosis. Autoubiquitinated in vitro in the presence of E2 enzyme UBE2D1/UBCH5A. As to expression, detected in brain, testis, heart, liver, lung and kidney with very low levels in skeletal muscle and spleen.

It catalyses the reaction S-ubiquitinyl-[E2 ubiquitin-conjugating enzyme]-L-cysteine + [acceptor protein]-L-lysine = [E2 ubiquitin-conjugating enzyme]-L-cysteine + N(6)-ubiquitinyl-[acceptor protein]-L-lysine.. It functions in the pathway protein modification; protein ubiquitination. In terms of biological role, E3 ubiquitin-protein ligase that catalyzes 'Lys-11'- or 'Lys-33'-linked polyubiquitin chains, with some preference for 'Lys-33' linkages. E3 ubiquitin-protein ligases accept ubiquitin from an E2 ubiquitin-conjugating enzyme in the form of a thioester and then directly transfers the ubiquitin to targeted substrates. Ubiquitinates SEPTIN4, DIABLO/SMAC and HTRA2 in vitro. Modulates pulmonary inflammation by targeting SOCS2 for ubiquitination and subsequent degradation by the proteasome. In Mus musculus (Mouse), this protein is Apoptosis-resistant E3 ubiquitin protein ligase 1 (Arel1).